The following is a 405-amino-acid chain: Phosphopentomutase (405 aa).

The Mn(2+) site is built by Asp10, Asp303, His308, Asp344, His345, and His356.

The protein belongs to the phosphopentomutase family. Requires Mn(2+) as cofactor.

Its subcellular location is the cytoplasm. The enzyme catalyses 2-deoxy-alpha-D-ribose 1-phosphate = 2-deoxy-D-ribose 5-phosphate. It carries out the reaction alpha-D-ribose 1-phosphate = D-ribose 5-phosphate. It functions in the pathway carbohydrate degradation; 2-deoxy-D-ribose 1-phosphate degradation; D-glyceraldehyde 3-phosphate and acetaldehyde from 2-deoxy-alpha-D-ribose 1-phosphate: step 1/2. Isomerase that catalyzes the conversion of deoxy-ribose 1-phosphate (dRib-1-P) and ribose 1-phosphate (Rib-1-P) to deoxy-ribose 5-phosphate (dRib-5-P) and ribose 5-phosphate (Rib-5-P), respectively. This is Phosphopentomutase from Shewanella sediminis (strain HAW-EB3).